The chain runs to 442 residues: Capsid vertex component 1 (442 aa).

Belongs to the herpesviridae CVC1 protein family. Interacts (via C-terminus) with capsid vertex component 2/CVC2.

The protein resides in the virion. Its subcellular location is the host nucleus. Capsid vertex-specific component that plays a role during viral DNA encapsidation, assuring correct genome cleavage and presumably stabilizing capsids that contain full-length viral genomes. In Human herpesvirus 6A (strain Uganda-1102) (HHV-6 variant A), this protein is Capsid vertex component 1.